The sequence spans 436 residues: Voltage-gated potassium channel regulatory subunit KCNG3 (436 aa).

The Cytoplasmic portion of the chain corresponds to 1-168; that stretch reads MTFGRSGAAS…RTFEEPTSSL (168 aa). A helical membrane pass occupies residues 169 to 190; the sequence is AAQILASVSVVFVIVSMVVLCA. At 191–220 the chain is on the extracellular side; the sequence is STLPDWRNAAADNRSLDDRSRYSAGPGREP. The chain crosses the membrane as a helical span at residues 221–242; that stretch reads SGIIEAICIGWFTAECIVRFIV. At 243-253 the chain is on the cytoplasmic side; sequence SKNKCEFVKRP. Residues 254 to 274 traverse the membrane as a helical segment; that stretch reads LNIIDLLAITPYYISVLMTVF. Over 275-284 the chain is Extracellular; it reads TGENSQLQRA. Residues 285–305 traverse the membrane as a helical; Voltage-sensor segment; it reads GVTLRVLRMMRIFWVIKLARH. The Cytoplasmic portion of the chain corresponds to 306 to 320; the sequence is FIGLQTLGLTLKRCY. The chain crosses the membrane as a helical span at residues 321–342; it reads REMVMLLVFICVAMAIFSALSQ. Over 343–360 the chain is Extracellular; that stretch reads LLEHGLDLETSNKDFTSI. An intramembrane region (helical) is located at residues 361–372; the sequence is PAACWWVIISMT. Residues 373 to 378 carry the Selectivity filter motif; it reads TVGYGD. The stretch at 373 to 380 is an intramembrane region; sequence TVGYGDMY. Residues 381–387 are Extracellular-facing; the sequence is PITVPGR. A helical membrane pass occupies residues 388-416; sequence ILGGVCVVSGIVLLALPITFIYHSFVQCY. Residues 417 to 436 lie on the Cytoplasmic side of the membrane; that stretch reads HELKFRSARYSRSLSTEFLN.

The protein belongs to the potassium channel family. G (TC 1.A.1.2) subfamily. Kv6.3/KCNG3 sub-subfamily. In terms of assembly, heterotetramer with KCNB1. Does not form homomultimers. Expressed in the brain, liver, testis, small intestine, colon, thymus and adrenal gland.

The protein resides in the cell membrane. It is found in the cytoplasm. In terms of biological role, regulatory subunit of the voltage-gated potassium (Kv) channel which, when coassembled with KCNB1, modulates the kinetics parameters of the heterotetrameric channel namely the inactivation and deactivation rate. Potassium channel subunit that does not form functional channels by itself. Reduces the deactivation rate. Moderately accelerates activation. The chain is Voltage-gated potassium channel regulatory subunit KCNG3 from Homo sapiens (Human).